The primary structure comprises 361 residues: Mannose-1-phosphate guanylyltransferase 1 (361 aa).

2 residues coordinate GDP-alpha-D-mannose: leucine 6 and valine 7. Residues glycine 9, glycine 11, threonine 12, arginine 13, and lysine 23 each contribute to the diphosphate site. GDP-alpha-D-mannose is bound by residues glycine 85, asparagine 109, aspartate 111, glycine 146, and asparagine 173.

The protein belongs to the transferase hexapeptide repeat family. Interacts in vitro with CSN5A and CSN5B, but in planta only with CSN5B, which targets CYT1 for degradation in the dark by the 26S proteasome. Forms homodimers in the unliganded structure. The product-bound structure is composed of six dimers that form a dodecameric assembly.

The protein resides in the cytoplasm. It localises to the nucleus. It carries out the reaction alpha-D-mannose 1-phosphate + GTP + H(+) = GDP-alpha-D-mannose + diphosphate. It participates in nucleotide-sugar biosynthesis; GDP-alpha-D-mannose biosynthesis; GDP-alpha-D-mannose from alpha-D-mannose 1-phosphate (GTP route): step 1/1. Functionally, essential protein during embryogenesis. Catalyzes a reaction of the Smirnoff-Wheeler pathway, the major route to ascorbate biosynthesis in plants. Plays an essential role in plant growth and development and cell-wall architecture. Provides GDP-mannose, used for cell wall carbohydrate biosynthesis, protein N-glycosylation, as well as for the biosynthesis of the antioxidant ascorbate. The chain is Mannose-1-phosphate guanylyltransferase 1 from Arabidopsis thaliana (Mouse-ear cress).